Reading from the N-terminus, the 303-residue chain is MTWPDRDTSAFPSALPGAFDASSAMSRGVVNLSSFSDFLRTQAPHLLPVSGSPGVTPSDAVPHGTTIVALKFPGGVVMAGDRRATQGHMIASRDVQKVYITDDYTVTGIAGTAAIAVEFARLYAVELEHYEKLEGVALTFPGKVNRLATMVRGNLGAALQGFVALPLLAGYDLDDPNPEGAGRIVSFDAAGGHNLEEEGYQSVGSGSIFAKSSMKKLYSQVTDADSALRVAIEALYDAADDDSATGGPDLVRGIFPTAVVITADGAVEIAEQQIADMCREIIQNRSRADTFGPDHAPVRGDEL.

Residues 1 to 64 constitute a propeptide, removed in mature form; by autocatalysis; that stretch reads MTWPDRDTSA…VTPSDAVPHG (64 aa). The active-site Nucleophile is Thr-65.

Belongs to the peptidase T1B family. The 20S proteasome core is composed of 14 alpha and 14 beta subunits that assemble into four stacked heptameric rings, resulting in a barrel-shaped structure. The two inner rings, each composed of seven catalytic beta subunits, are sandwiched by two outer rings, each composed of seven alpha subunits. The catalytic chamber with the active sites is on the inside of the barrel. Has a gated structure, the ends of the cylinder being occluded by the N-termini of the alpha-subunits. Is capped by the proteasome-associated ATPase, ARC.

The protein localises to the cytoplasm. The enzyme catalyses Cleavage of peptide bonds with very broad specificity.. Its pathway is protein degradation; proteasomal Pup-dependent pathway. The formation of the proteasomal ATPase ARC-20S proteasome complex, likely via the docking of the C-termini of ARC into the intersubunit pockets in the alpha-rings, may trigger opening of the gate for substrate entry. Interconversion between the open-gate and close-gate conformations leads to a dynamic regulation of the 20S proteasome proteolysis activity. Its function is as follows. Component of the proteasome core, a large protease complex with broad specificity involved in protein degradation. The polypeptide is Proteasome subunit beta (Mycolicibacterium gilvum (strain PYR-GCK) (Mycobacterium gilvum (strain PYR-GCK))).